Reading from the N-terminus, the 279-residue chain is Phage-like element PBSX protein XepA (279 aa).

To B.subtilis YqxG/YqdC.

Its function is as follows. Not known; does not seem to be involved in host cell lysis. In Bacillus subtilis (strain 168), this protein is Phage-like element PBSX protein XepA (xepA).